Reading from the N-terminus, the 270-residue chain is MNTSILAPPESLLEAQKVRLAIREGYDRPTAGMANGLTQVNMISVPQDWAYDFLLYTQRNPQSCPVLDVIDAGQFQSRLIQDKQHDIRTDFPRYRIWEYGQCVDEVNDATSIWNNHPDLVTFLIGCSFSFESALLNAGIEVRHITDQRNVPMYLSNIPCASAGRISGNMVVSMRPIPAAQVSQAVQITAKMPRVHGAPVHIGDPKSLGIADLSKPDFGDFPRILDGEIPVFWACGVTPQAAVMRSKVPFAISHAPGYMLITDVPDQAWML.

The protein belongs to the D-glutamate cyclase family.

This is Putative hydro-lyase ACIAD2519 from Acinetobacter baylyi (strain ATCC 33305 / BD413 / ADP1).